The following is a 477-amino-acid chain: Aspartyl/glutamyl-tRNA(Asn/Gln) amidotransferase subunit B (477 aa).

Belongs to the GatB/GatE family. GatB subfamily. Heterotrimer of A, B and C subunits.

It carries out the reaction L-glutamyl-tRNA(Gln) + L-glutamine + ATP + H2O = L-glutaminyl-tRNA(Gln) + L-glutamate + ADP + phosphate + H(+). It catalyses the reaction L-aspartyl-tRNA(Asn) + L-glutamine + ATP + H2O = L-asparaginyl-tRNA(Asn) + L-glutamate + ADP + phosphate + 2 H(+). Allows the formation of correctly charged Asn-tRNA(Asn) or Gln-tRNA(Gln) through the transamidation of misacylated Asp-tRNA(Asn) or Glu-tRNA(Gln) in organisms which lack either or both of asparaginyl-tRNA or glutaminyl-tRNA synthetases. The reaction takes place in the presence of glutamine and ATP through an activated phospho-Asp-tRNA(Asn) or phospho-Glu-tRNA(Gln). The polypeptide is Aspartyl/glutamyl-tRNA(Asn/Gln) amidotransferase subunit B (Coxiella burnetii (strain RSA 493 / Nine Mile phase I)).